The sequence spans 71 residues: Small ribosomal subunit protein bS21 (71 aa).

The interval 47–71 is disordered; sequence RENATRAKRHAKRVARENARNTRLY. The segment covering 60–71 has biased composition (basic and acidic residues); the sequence is VARENARNTRLY.

Belongs to the bacterial ribosomal protein bS21 family.

In Actinobacillus succinogenes (strain ATCC 55618 / DSM 22257 / CCUG 43843 / 130Z), this protein is Small ribosomal subunit protein bS21.